Consider the following 375-residue polypeptide: MPLIDMPEFAGELLEEFAARRTSRVNTPVIQPAEPFLDMAGEDLRRRIFMTESETGESLCLRPEFTIPVCLRHIETATGTPKRYSYLGEVFRQRREGASEFYQAGIEDLGDTDIAAADARVVIDATAILQRLLPGRSLAVTLGDQQVFEAVVAALGLPLGWQKRLVQAFGDMAQLDALLESLVHPKPMTGLDARVAGLLATGDEAVLVDYLDTVMQETGYSTNASRSPLEIARRLREKLALAATRLPDESFELLKQFLALQAPLPQASQVLGDFAARAKLKLDGALSAFDKRVAALANAGVDLETVTYGAAFGRPLDYYTGLVFEVVEAGSDSVLAGGGRYDRLLTLLGAQEKIPAVGFSLWLDRIKAVRGSDKP.

This sequence belongs to the class-II aminoacyl-tRNA synthetase family. HisZ subfamily. In terms of assembly, heteromultimer composed of HisG and HisZ subunits.

It is found in the cytoplasm. The protein operates within amino-acid biosynthesis; L-histidine biosynthesis; L-histidine from 5-phospho-alpha-D-ribose 1-diphosphate: step 1/9. In terms of biological role, required for the first step of histidine biosynthesis. May allow the feedback regulation of ATP phosphoribosyltransferase activity by histidine. This Agrobacterium fabrum (strain C58 / ATCC 33970) (Agrobacterium tumefaciens (strain C58)) protein is ATP phosphoribosyltransferase regulatory subunit.